The primary structure comprises 742 residues: Probable serine/threonine-protein kinase PkwA (742 aa).

The 251-residue stretch at 16-266 folds into the Protein kinase domain; the sequence is YRLVSRLGAG…TAELLAQLST (251 aa). ATP is bound by residues 22-30 and Lys44; that span reads LGAGGMGQV. The active-site Proton acceptor is Asp138. The disordered stretch occupies residues 266–394; it reads TDHTGDDWPP…PWSPPRVQPP (129 aa). Positions 301-318 are enriched in pro residues; that stretch reads EPPPPSHGPPRPSEPLPD. The segment covering 343–356 has biased composition (basic and acidic residues); the sequence is LEEKPIQVIHEPER. Residues 377 to 392 are compositionally biased toward pro residues; the sequence is PRPAAPQPPWSPPRVQ. WD repeat units follow at residues 455-496, 497-538, 539-580, 581-621, 622-663, 664-705, and 706-742; these read ILTT…ELHT, LEGH…ERAV, FEGH…EHAV, LKGH…KERD, VLQA…ALHT, FEGH…EHTT, and LEGHTEPVHSVAFHPEGTTLASASEDGTIRIWPIATE.

This sequence belongs to the protein kinase superfamily. Ser/Thr protein kinase family.

The catalysed reaction is L-seryl-[protein] + ATP = O-phospho-L-seryl-[protein] + ADP + H(+). It carries out the reaction L-threonyl-[protein] + ATP = O-phospho-L-threonyl-[protein] + ADP + H(+). Its function is as follows. May play a regulatory role during the complex growth cycle and in secondary metabolite production. The polypeptide is Probable serine/threonine-protein kinase PkwA (pkwA) (Thermomonospora curvata).